The sequence spans 770 residues: Serine/threonine-protein kinase PLK4 (770 aa).

Positions 14-267 (YEVQHLLGKG…LEHVLRHPFL (254 aa)) constitute a Protein kinase domain. ATP is bound by residues 20–28 (LGKGGFASV) and K43. D138 functions as the Proton acceptor in the catalytic mechanism. The Cryptic POLO box 1 (CPB1) domain maps to 383 to 500 (EERISVPPLN…DRFVGLVKSK (118 aa)). Residues 501-604 (TPKVTYFSAL…GRRPVTEVQP (104 aa)) enclose the Cryptic POLO box 2 (CPB2) domain. The POLO box domain occupies 662–741 (PIKRINLPDI…LPHIQLKLKT (80 aa)).

This sequence belongs to the protein kinase superfamily. Ser/Thr protein kinase family. CDC5/Polo subfamily. Homodimer. Ubiquitinated by the SCF(Slimb) ubiquitin ligase complex; leading to its degradation by the proteasome during interphase and regulating centriole number and ensuring the block to centriole reduplication.

It is found in the cytoplasm. Its subcellular location is the cytoskeleton. It localises to the microtubule organizing center. The protein localises to the centrosome. The protein resides in the centriole. The catalysed reaction is L-seryl-[protein] + ATP = O-phospho-L-seryl-[protein] + ADP + H(+). The enzyme catalyses L-threonyl-[protein] + ATP = O-phospho-L-threonyl-[protein] + ADP + H(+). In terms of biological role, serine/threonine-protein kinase that plays a central role in centriole duplication. Able to trigger procentriole formation on the surface of the mother centriole cylinder, using mother centriole as a platform, leading to the recruitment of centriole biogenesis proteins such as sas-6. When overexpressed, it is able to induce centrosome amplification through the simultaneous generation of multiple procentrioles adjoining each parental centriole during S phase. Centrosome amplification following overexpression can initiate tumorigenesis, highlighting the importance of centrosome regulation in cancers. In Drosophila ananassae (Fruit fly), this protein is Serine/threonine-protein kinase PLK4 (SAK).